We begin with the raw amino-acid sequence, 98 residues long: NADH-ubiquinone oxidoreductase chain 4L (98 aa).

A run of 3 helical transmembrane segments spans residues Met1–Met21, Ala29–Leu49, and Ile61–Val81.

This sequence belongs to the complex I subunit 4L family. Core subunit of respiratory chain NADH dehydrogenase (Complex I) which is composed of 45 different subunits.

The protein localises to the mitochondrion inner membrane. The enzyme catalyses a ubiquinone + NADH + 5 H(+)(in) = a ubiquinol + NAD(+) + 4 H(+)(out). Its function is as follows. Core subunit of the mitochondrial membrane respiratory chain NADH dehydrogenase (Complex I) which catalyzes electron transfer from NADH through the respiratory chain, using ubiquinone as an electron acceptor. Part of the enzyme membrane arm which is embedded in the lipid bilayer and involved in proton translocation. This Balaenoptera omurai (Omura's baleen whale) protein is NADH-ubiquinone oxidoreductase chain 4L (MT-ND4L).